The primary structure comprises 54 residues: Putative ATP synthase subunit epsilon, mitochondrial (54 aa).

Belongs to the eukaryotic ATPase epsilon family. As to quaternary structure, F-type ATPases have 2 components, CF(1) - the catalytic core - and CF(0) - the membrane proton channel. CF(1) has five subunits: alpha(3), beta(3), gamma(1), delta(1), epsilon(1). CF(0) seems to have nine subunits: a, b, c, d, e, f, g, F6 and 8 (or A6L).

It localises to the mitochondrion. It is found in the mitochondrion inner membrane. Its function is as follows. Mitochondrial membrane ATP synthase (F(1)F(0) ATP synthase or Complex V) produces ATP from ADP in the presence of a proton gradient across the membrane which is generated by electron transport complexes of the respiratory chain. F-type ATPases consist of two structural domains, F(1) - containing the extramembraneous catalytic core, and F(0) - containing the membrane proton channel, linked together by a central stalk and a peripheral stalk. During catalysis, ATP synthesis in the catalytic domain of F(1) is coupled via a rotary mechanism of the central stalk subunits to proton translocation. Part of the complex F(1) domain and of the central stalk which is part of the complex rotary element. Rotation of the central stalk against the surrounding alpha(3)beta(3) subunits leads to hydrolysis of ATP in three separate catalytic sites on the beta subunits. The polypeptide is Putative ATP synthase subunit epsilon, mitochondrial (Caenorhabditis elegans).